The chain runs to 664 residues: Cyclic nucleotide-gated channel alpha-2 (664 aa).

Residues 1 to 11 show a composition bias toward polar residues; the sequence is MTEKTNGVKSS. The segment at 1 to 49 is disordered; sequence MTEKTNGVKSSPANNHNHHAPPAIKANGKDDHRTSSRPHSAADDDTSSE. At 1–144 the chain is on the cytoplasmic side; sequence MTEKTNGVKS…PAGDWYYCWL (144 aa). A compositionally biased stretch (low complexity) spans 12–23; it reads PANNHNHHAPPA. Residues 145-166 form a helical membrane-spanning segment; the sequence is FVIAMPVLYNWCLLVARACFSD. Residues 167 to 176 are Extracellular-facing; sequence LQKGYYLVWL. A helical membrane pass occupies residues 177-197; sequence VLDYVSDVVYIADLFIRLRTG. Topologically, residues 198–222 are cytoplasmic; that stretch reads FLEQGLLVKDTKKLRDNYIHTLQFK. The helical transmembrane segment at 223–241 threads the bilayer; the sequence is LDVASIIPTDLIYFAVDIH. Residues 242–246 lie on the Extracellular side of the membrane; it reads SPEVR. Residues 247–265 form a helical membrane-spanning segment; it reads FNRLLHFARMFEFFDRTET. Topologically, residues 266–272 are cytoplasmic; the sequence is RTNYPNI. The interval 270–378 is ion conduction pathway; the sequence is PNIFRISNLV…GNVGSMISNM (109 aa). A helical transmembrane segment spans residues 273–296; sequence FRISNLVLYILVIIHWNACIYYAI. The Extracellular portion of the chain corresponds to 297 to 319; sequence SKSIGFGVDTWVYPNITDPEYGY. Transmembrane regions (helical) follow at residues 320–354 and 355–379; these read LARE…LFVI and FDFL…SNMN. The tract at residues 337–340 is selectivity filter; it reads TIGE. The tract at residues 380-456 is C-linker; that stretch reads ATRAEFQAKI…STLKKVRIFH (77 aa). The Cytoplasmic segment spans residues 380–664; sequence ATRAEFQAKI…SPELAAADEP (285 aa). Residues 460 to 580 form a cyclic nucleotide-binding domain region; it reads AGLLVELVLK…EERGREILMK (121 aa). 3',5'-cyclic GMP is bound by residues Gly-520, Ser-523, Arg-536, and Thr-537. Residues Arg-536 and Thr-537 each coordinate 3',5'-cyclic AMP. The stretch at 597–651 forms a coiled coil; it reads VQEKLGQLETNMETLYTRFGRLLAEYTGAQQKLKQRITVLETKMKQNNEDDYLSD. The interval 641–664 is disordered; the sequence is KQNNEDDYLSDGMNSPELAAADEP.

This sequence belongs to the cyclic nucleotide-gated cation channel (TC 1.A.1.5) family. CNGA2 subfamily. As to quaternary structure, the olfactory cyclic nucleotide-gated channel is an heterotetramer composed of CNGA2, CNGA4 and CNGB1b subunits with 2:1:1 stoichiometry.

Its subcellular location is the cell projection. It localises to the cilium membrane. It carries out the reaction Ca(2+)(in) = Ca(2+)(out). The enzyme catalyses Na(+)(in) = Na(+)(out). The catalysed reaction is K(+)(in) = K(+)(out). It catalyses the reaction NH4(+)(in) = NH4(+)(out). It carries out the reaction Rb(+)(in) = Rb(+)(out). The enzyme catalyses Li(+)(in) = Li(+)(out). The catalysed reaction is Cs(+)(in) = Cs(+)(out). Its function is as follows. Pore-forming subunit of the olfactory cyclic nucleotide-gated channel. Operates in the cilia of olfactory sensory neurons where chemical stimulation of the odorant is converted to an electrical signal. Mediates odorant-induced cAMP-dependent Ca(2+) influx triggering neuron depolarization. The rise of intracellular Ca(2+) levels potentiates the olfactory response by activating Ca(2+)-dependent Cl(-) channels, but it also serves as a negative feedback signal to desensitize the channel for rapid adaptation to odorants. Conducts cAMP- and cGMP-gated ion currents, with permeability for monovalent and divalent cations. The sequence is that of Cyclic nucleotide-gated channel alpha-2 from Homo sapiens (Human).